A 217-amino-acid polypeptide reads, in one-letter code: Resolvase homolog YneB (217 aa).

The 146-residue stretch at 2-147 (KALIYARVST…RGMKRAVKNG (146 aa)) folds into the Resolvase/invertase-type recombinase catalytic domain. Serine 10 serves as the catalytic O-(5'-phospho-DNA)-serine intermediate.

This sequence belongs to the site-specific recombinase resolvase family.

This is Resolvase homolog YneB (yneB) from Bacillus subtilis (strain 168).